A 670-amino-acid chain; its full sequence is DNA ligase (670 aa).

NAD(+) is bound by residues 32–36 (DSEYD), 81–82 (SL), and Glu114. Lys116 functions as the N6-AMP-lysine intermediate in the catalytic mechanism. Residues Arg137, Glu174, Lys291, and Lys315 each coordinate NAD(+). The Zn(2+) site is built by Cys409, Cys412, Cys427, and Cys433. Positions 592–670 (ASENLFKDKT…EEEFLAQITR (79 aa)) constitute a BRCT domain.

Belongs to the NAD-dependent DNA ligase family. LigA subfamily. Mg(2+) is required as a cofactor. Requires Mn(2+) as cofactor.

It catalyses the reaction NAD(+) + (deoxyribonucleotide)n-3'-hydroxyl + 5'-phospho-(deoxyribonucleotide)m = (deoxyribonucleotide)n+m + AMP + beta-nicotinamide D-nucleotide.. DNA ligase that catalyzes the formation of phosphodiester linkages between 5'-phosphoryl and 3'-hydroxyl groups in double-stranded DNA using NAD as a coenzyme and as the energy source for the reaction. It is essential for DNA replication and repair of damaged DNA. This chain is DNA ligase, found in Haemophilus influenzae (strain 86-028NP).